We begin with the raw amino-acid sequence, 553 residues long: CDP-diacylglycerol--glycerol-3-phosphate 3-phosphatidyltransferase, mitochondrial (553 aa).

Residues 1–25 (MAAPAAGPVFWRRLLGLLPGRPGLA) constitute a mitochondrion transit peptide. Phosphoserine is present on Ser-46. Position 121–128 (121–128 (ASLYLGTG)) interacts with ATP. PLD phosphodiesterase domains lie at 212–238 (TIGLQHIKVYLFDNNVILSGANLSDSY) and 457–490 (RGWTFHAKGLWLYLAGSSLPCLTLIGSPNFGYRS). Active-site residues include His-217, Lys-219, and Asp-224.

It belongs to the CDP-alcohol phosphatidyltransferase class-II family. As to expression, widely expressed with higher expression in testis, liver and brain.

The protein localises to the mitochondrion. The catalysed reaction is a CDP-1,2-diacyl-sn-glycerol + sn-glycerol 3-phosphate = a 1,2-diacyl-sn-glycero-3-phospho-(1'-sn-glycero-3'-phosphate) + CMP + H(+). It participates in phospholipid metabolism; phosphatidylglycerol biosynthesis; phosphatidylglycerol from CDP-diacylglycerol: step 1/2. With respect to regulation, activated by calcium and magnesium and inhibited by other bivalent cations. In terms of biological role, functions in the biosynthesis of the anionic phospholipids phosphatidylglycerol and cardiolipin. The protein is CDP-diacylglycerol--glycerol-3-phosphate 3-phosphatidyltransferase, mitochondrial (Pgs1) of Mus musculus (Mouse).